Reading from the N-terminus, the 256-residue chain is UPF0259 membrane protein plu2479 (256 aa).

A run of 5 helical transmembrane segments spans residues 23–43 (TLTLAVLAALVTTLLGHLFIP), 89–109 (IFSSMIGSVLLVGGVLTLVAA), 132–152 (LFLLLLICTLLIQFGLMLMLV), 192–212 (LLVPAILLWLTARLLLVFIID), and 221–241 (MAGIILGVFNNLISAILLIYL).

Belongs to the UPF0259 family.

It localises to the cell inner membrane. The chain is UPF0259 membrane protein plu2479 from Photorhabdus laumondii subsp. laumondii (strain DSM 15139 / CIP 105565 / TT01) (Photorhabdus luminescens subsp. laumondii).